Consider the following 397-residue polypeptide: 1-deoxy-D-xylulose 5-phosphate reductoisomerase (397 aa).

NADPH is bound by residues threonine 10, glycine 11, serine 12, isoleucine 13, glycine 36, asparagine 38, and asparagine 124. Residue lysine 125 participates in 1-deoxy-D-xylulose 5-phosphate binding. Position 126 (glutamate 126) interacts with NADPH. A Mn(2+)-binding site is contributed by aspartate 150. 1-deoxy-D-xylulose 5-phosphate is bound by residues serine 151, glutamate 152, serine 186, and histidine 209. Glutamate 152 lines the Mn(2+) pocket. Glycine 215 contributes to the NADPH binding site. The 1-deoxy-D-xylulose 5-phosphate site is built by serine 222, asparagine 227, lysine 228, and glutamate 231. A Mn(2+)-binding site is contributed by glutamate 231.

Belongs to the DXR family. It depends on Mg(2+) as a cofactor. Mn(2+) is required as a cofactor.

It carries out the reaction 2-C-methyl-D-erythritol 4-phosphate + NADP(+) = 1-deoxy-D-xylulose 5-phosphate + NADPH + H(+). The protein operates within isoprenoid biosynthesis; isopentenyl diphosphate biosynthesis via DXP pathway; isopentenyl diphosphate from 1-deoxy-D-xylulose 5-phosphate: step 1/6. Its function is as follows. Catalyzes the NADPH-dependent rearrangement and reduction of 1-deoxy-D-xylulose-5-phosphate (DXP) to 2-C-methyl-D-erythritol 4-phosphate (MEP). This Photobacterium profundum (strain SS9) protein is 1-deoxy-D-xylulose 5-phosphate reductoisomerase.